The sequence spans 316 residues: LIM/homeobox protein lim-6 (316 aa).

LIM zinc-binding domains follow at residues 40 to 101 (KLCS…LYGK) and 102 to 163 (RCRR…ICNF). The segment at residues 186–245 (PKRPRTILNAQQRRQFKTAFERSSKPSRKVREQLANETGLSVRVVQVWFQNQRAKIKKLN) is a DNA-binding region (homeobox). The disordered stretch occupies residues 244–297 (LNKKDSDSGDTFKHGPGSEGRSTEDIRSSDDEEESVINLDADEVETSETSSYTD). Positions 246 to 256 (KKDSDSGDTFK) are enriched in basic and acidic residues. Over residues 273–289 (DDEEESVINLDADEVET) the composition is skewed to acidic residues.

It localises to the nucleus. Transcription factor. Required for the terminal differentiation of sensory- and motor-neurons, especially GABAergic neurons, and for morphological aspects of uterine development. Plays a role in the cell-type-specific regulation of glutamic acid decarboxylase unc-25. Involved in promoting sleep-like behavioral quiescence, acting by modulating expression of transcription factor aptf-1 in the single sleep-active ring interneuron RIS. Plays a role in regulation of RIS differentiation. Required for the functional asymmetry of the ASER and ASEL chemosensory neuron pair, conferring the ability to discriminate sodium from chloride, perhaps by modulating expression of receptor-type guanylate cyclases, such as gcy-5. Involved in regulating postembryonic axon maintenance in the ventral nerve cord, acting in concert with LIM homeobox protein ceh-14, via modulation of expression of immunoglobulin domain zig genes in the interneuron PVT. May play a role in the functions of the excretory gland cell. The sequence is that of LIM/homeobox protein lim-6 from Caenorhabditis elegans.